We begin with the raw amino-acid sequence, 440 residues long: Glycerate 2-kinase (440 aa).

Lys58 is a binding site for substrate.

This sequence belongs to the glycerate kinase type-1 family. In terms of assembly, homodimer. Mg(2+) serves as cofactor. Ni(2+) is required as a cofactor. Requires Mn(2+) as cofactor. It depends on Co(2+) as a cofactor.

It carries out the reaction (R)-glycerate + ATP = (2R)-2-phosphoglycerate + ADP + H(+). In terms of biological role, catalyzes the ATP-dependent phosphorylation of D-glycerate to 2-phosphoglycerate. It can also utilize GTP, CTP, UTP, ADP or pyrophosphate as phosphate donor. The protein is Glycerate 2-kinase (gck) of Pyrococcus horikoshii (strain ATCC 700860 / DSM 12428 / JCM 9974 / NBRC 100139 / OT-3).